A 394-amino-acid polypeptide reads, in one-letter code: ATP phosphoribosyltransferase regulatory subunit (394 aa).

The protein belongs to the class-II aminoacyl-tRNA synthetase family. HisZ subfamily. Heteromultimer composed of HisG and HisZ subunits.

It is found in the cytoplasm. Its pathway is amino-acid biosynthesis; L-histidine biosynthesis; L-histidine from 5-phospho-alpha-D-ribose 1-diphosphate: step 1/9. Required for the first step of histidine biosynthesis. May allow the feedback regulation of ATP phosphoribosyltransferase activity by histidine. The polypeptide is ATP phosphoribosyltransferase regulatory subunit (Saccharophagus degradans (strain 2-40 / ATCC 43961 / DSM 17024)).